The chain runs to 145 residues: Ribonuclease VapC7 (145 aa).

The PINc domain maps to 2-129 (IVLDTTVLVY…PAFADLSDVV (128 aa)). The Mg(2+) site is built by aspartate 5 and aspartate 100.

Belongs to the PINc/VapC protein family. The cofactor is Mg(2+).

In terms of biological role, toxic component of a type II toxin-antitoxin (TA) system. An RNase. The cognate antitoxin is VapB7. The sequence is that of Ribonuclease VapC7 from Mycobacterium tuberculosis (strain ATCC 25618 / H37Rv).